The following is a 277-amino-acid chain: Pantothenate synthetase (277 aa).

26–33 (MGYLHQGH) contributes to the ATP binding site. His33 serves as the catalytic Proton donor. Gln57 provides a ligand contact to (R)-pantoate. Gln57 contributes to the beta-alanine binding site. 143–146 (GQKD) contacts ATP. (R)-pantoate is bound at residue Gln149. ATP contacts are provided by residues Val172 and 180–183 (LSSR).

Belongs to the pantothenate synthetase family. In terms of assembly, homodimer.

It localises to the cytoplasm. It catalyses the reaction (R)-pantoate + beta-alanine + ATP = (R)-pantothenate + AMP + diphosphate + H(+). It participates in cofactor biosynthesis; (R)-pantothenate biosynthesis; (R)-pantothenate from (R)-pantoate and beta-alanine: step 1/1. Its function is as follows. Catalyzes the condensation of pantoate with beta-alanine in an ATP-dependent reaction via a pantoyl-adenylate intermediate. The sequence is that of Pantothenate synthetase from Chloroflexus aggregans (strain MD-66 / DSM 9485).